The primary structure comprises 430 residues: Adenylosuccinate synthetase (430 aa).

GTP contacts are provided by residues 13–19 (GDEGKGK) and 41–43 (GHT). The active-site Proton acceptor is Asp14. Mg(2+)-binding residues include Asp14 and Gly41. IMP is bound by residues 14–17 (DEGK), 39–42 (NAGH), Thr130, Arg144, Gln225, Thr240, and Arg304. Residue His42 is the Proton donor of the active site. Position 300-306 (300-306 (ATTGRAR)) interacts with substrate. GTP contacts are provided by residues Arg306, 332 to 334 (KLD), and 414 to 416 (STG).

This sequence belongs to the adenylosuccinate synthetase family. In terms of assembly, homodimer. Mg(2+) serves as cofactor.

It localises to the cytoplasm. It carries out the reaction IMP + L-aspartate + GTP = N(6)-(1,2-dicarboxyethyl)-AMP + GDP + phosphate + 2 H(+). It functions in the pathway purine metabolism; AMP biosynthesis via de novo pathway; AMP from IMP: step 1/2. Functionally, plays an important role in the de novo pathway of purine nucleotide biosynthesis. Catalyzes the first committed step in the biosynthesis of AMP from IMP. This chain is Adenylosuccinate synthetase, found in Pseudomonas paraeruginosa (strain DSM 24068 / PA7) (Pseudomonas aeruginosa (strain PA7)).